The primary structure comprises 1213 residues: A disintegrin and metalloproteinase with thrombospondin motifs 2 (1213 aa).

Positions 1–28 are cleaved as a signal peptide; sequence MDPPAGAARRLLCPALLLLLLPPPPLLL. The propeptide occupies 29–260; sequence LPPPPASVRL…INSSRRRVRR (232 aa). N-linked (GlcNAc...) asparagine glycosylation is present at Asn-111. Residues 211–232 form a disordered region; sequence YRRPPTPKPPPVSEPQALDTGV. The segment covering 214-223 has biased composition (pro residues); it reads PPTPKPPPVS. A glycan (N-linked (GlcNAc...) asparagine) is linked at Asn-252. In terms of domain architecture, Peptidase M12B spans 267 to 471; it reads YNIEVLLGVD…HSYDCLRDDP (205 aa). Cystine bridges form between Cys-344/Cys-393, Cys-387/Cys-466, Cys-426/Cys-452, Cys-493/Cys-518, Cys-504/Cys-527, Cys-513/Cys-546, Cys-540/Cys-551, Cys-574/Cys-611, Cys-578/Cys-616, and Cys-589/Cys-601. A Zn(2+)-binding site is contributed by His-409. Glu-410 is an active-site residue. His-413 and His-419 together coordinate Zn(2+). Positions 480 to 560 constitute a Disintegrin domain; the sequence is PQLPGLHYSM…CIWLTPDILK (81 aa). In terms of domain architecture, TSP type-1 1 spans 561–617; sequence RDGNWGAWTPFGSCSRTCGTGVKFRTRQCDNPHPANGGRTCSGLAYDFQLCNPQDCP. Residues 692-694 carry the Cell attachment site motif; that stretch reads RGD. The tract at residues 723 to 851 is spacer; sequence CKVVKGTFTR…LNVDDNNVLE (129 aa). TSP type-1 domains are found at residues 855–913, 915–975, and 976–1030; these read VRHE…NPQE, SQPV…NREL, and CPGR…APCP. N-linked (GlcNAc...) asparagine glycosylation is found at Asn-949, Asn-950, and Asn-994. 3 disulfides stabilise this stretch: Cys-988-Cys-1024, Cys-992-Cys-1029, and Cys-1003-Cys-1013. A glycan (N-linked (GlcNAc...) asparagine) is linked at Asn-1032. The PLAC domain occupies 1060-1098; the sequence is SKDQCQGDKSMFCRMEVLSRYCSIPSYNKLCCKSCNPPR. 3 N-linked (GlcNAc...) asparagine glycosylation sites follow: Asn-1099, Asn-1147, and Asn-1152.

May belong to a multimeric complex. Binds specifically to collagen type XIV. Requires Zn(2+) as cofactor. Post-translationally, the precursor is cleaved by a furin endopeptidase. Glycosylated. Can be O-fucosylated by POFUT2 on a serine or a threonine residue found within the consensus sequence C1-X(2)-(S/T)-C2-G of the TSP type-1 repeat domains where C1 and C2 are the first and second cysteine residue of the repeat, respectively. Fucosylated repeats can then be further glycosylated by the addition of a beta-1,3-glucose residue by the glucosyltransferase, B3GALTL. Fucosylation mediates the efficient secretion of ADAMTS family members. Can also be C-glycosylated with one or two mannose molecules on tryptophan residues within the consensus sequence W-X-X-W of the TPRs, and N-glycosylated. These other glycosylations can also facilitate secretion.

It is found in the secreted. The protein localises to the extracellular space. It localises to the extracellular matrix. It catalyses the reaction Cleaves the N-propeptide of collagen chain alpha1(I) at Pro-|-Gln and of alpha1(II) and alpha2(I) at Ala-|-Gln.. In terms of biological role, cleaves the propeptides of type I and II collagen prior to fibril assembly. Does not act on type III collagen. Cleaves lysyl oxidase LOX at a site downstream of its propeptide cleavage site to produce a short LOX form with reduced collagen-binding activity. This chain is A disintegrin and metalloproteinase with thrombospondin motifs 2 (Adamts2), found in Mus musculus (Mouse).